We begin with the raw amino-acid sequence, 805 residues long: Na(+)/H(+) antiporter subunit A (805 aa).

The next 21 membrane-spanning stretches (helical) occupy residues 4-22, 29-51, 80-102, 109-128, 132-154, 167-189, 209-231, 244-266, 271-293, 300-322, 332-354, 375-397, 431-453, 474-496, 529-551, 597-614, 629-651, 656-674, 679-701, 714-736, and 778-795; these read LHWA…PFLY, HTGW…YLSI, SLLF…IFYL, LNNF…GVVL, LIVL…SYWF, MLIT…VMTG, FLPA…PFHI, SAYL…LTPV, AEWF…TSAV, GILA…LGSA, PAFY…TFKG, LGGL…ASMA, IIIV…IMFF, IGML…FPNI, GFNA…FLMM, YFAY…YTMF, IAPY…PFIN, AVVV…FVVF, LALT…FYHL, NVLN…LSSL, and MLEV…IALI.

The protein belongs to the CPA3 antiporters (TC 2.A.63) subunit A family. In terms of assembly, forms a heterooligomeric complex that consists of seven subunits: MrpA, MrpB, MrpC, MrpD, MrpE, MrpF and MrpG.

It is found in the cell membrane. In terms of biological role, mnh complex is a Na(+)Li(+)/H(+) antiporter involved in Na(+) and/or Li(+) excretion and Na(+) resistance. Na(+)/H(+) antiport consumes a transmembrane electrical potential, and is thus inferred to be electrogenic. Does not transport K(+), Ca(2+) or Mg(2+). The chain is Na(+)/H(+) antiporter subunit A (mrpA) from Alkalihalophilus pseudofirmus (strain ATCC BAA-2126 / JCM 17055 / OF4) (Bacillus pseudofirmus).